The chain runs to 376 residues: Multicilin (376 aa).

The stretch at 165–213 forms a coiled coil; that stretch reads EQYWRDVADHNQKALGDALVENNQLQVSLTEKQEEIASLKEKNIQLNEL. A disordered region spans residues 230-261; that stretch reads ERPKHSSGATQGRLPVKRSLEDFYPQSNEPDS. Positions 331–376 are TIRT domain; that stretch reads TELEEDVSFRTSIKEHSTIRTLAFPQGNAFTIRTAAGGYKFRWVPN.

Belongs to the geminin family. In terms of assembly, component of the EDM complex, at least composed of e2f4, e2f5, mcidas and tfdp1.

It localises to the nucleus. Its function is as follows. Transcription regulator specifically required for multiciliate cell differentiation. Acts in a multiprotein complex containing e2f4 and e2f5 that binds and activate genes required for centriole biogenesis. Activates genes required for centriole assembly (plk4, cep152) and genes specifically required for motile cilia formation (foxj1). Also promotes the deuterosome pathway of centriole biogenesis by activating expression of deup1, but not its paralog cep63. The sequence is that of Multicilin (mcidas) from Xenopus tropicalis (Western clawed frog).